The primary structure comprises 946 residues: Villin-4 (946 aa).

Gelsolin-like repeat units follow at residues 28–109 (NFKP…ETEK), 152–219 (VHVK…EDGK), 274–339 (LEHE…TIMF), and 641–715 (EIHH…PQFF). 2 disordered regions span residues 744 to 783 (ATPSLDKPKRRTPAFSGRNAGQDKSQQRTRSMSHSPERHR) and 846 to 902 (TKST…PAPD). The span at 765 to 777 (QDKSQQRTRSMSH) shows a compositional bias: polar residues. The span at 874 to 883 (SENEPEDDEN) shows a compositional bias: acidic residues. In terms of domain architecture, HP spans 881–946 (DENSTIYPYE…NRLKSDLQLF (66 aa)).

Belongs to the villin/gelsolin family.

It localises to the cytoplasm. The protein localises to the cytoskeleton. Functionally, ca(2+)-regulated actin-binding protein. Binds actin microfilaments (MFs). Involved in actin filament bundling, severing and capping. Caps the barbed end of actin filaments and is able to sever them in a calcium-dependent manner. The chain is Villin-4 from Oryza sativa subsp. indica (Rice).